The following is a 165-amino-acid chain: Large ribosomal subunit protein uL10 (165 aa).

Belongs to the universal ribosomal protein uL10 family. Part of the ribosomal stalk of the 50S ribosomal subunit. The N-terminus interacts with L11 and the large rRNA to form the base of the stalk. The C-terminus forms an elongated spine to which L12 dimers bind in a sequential fashion forming a multimeric L10(L12)X complex.

Functionally, forms part of the ribosomal stalk, playing a central role in the interaction of the ribosome with GTP-bound translation factors. This is Large ribosomal subunit protein uL10 from Enterobacter sp. (strain 638).